A 341-amino-acid chain; its full sequence is Methionine import ATP-binding protein MetN 2 (341 aa).

Residues 2 to 241 (IELKEVVKEY…PQHAVTKRFV (240 aa)) form the ABC transporter domain. 38–45 (GFSGAGKS) is an ATP binding site.

This sequence belongs to the ABC transporter superfamily. Methionine importer (TC 3.A.1.24) family. As to quaternary structure, the complex is composed of two ATP-binding proteins (MetN), two transmembrane proteins (MetI) and a solute-binding protein (MetQ).

Its subcellular location is the cell membrane. It catalyses the reaction L-methionine(out) + ATP + H2O = L-methionine(in) + ADP + phosphate + H(+). It carries out the reaction D-methionine(out) + ATP + H2O = D-methionine(in) + ADP + phosphate + H(+). In terms of biological role, part of the ABC transporter complex MetNIQ involved in methionine import. Responsible for energy coupling to the transport system. The protein is Methionine import ATP-binding protein MetN 2 of Staphylococcus aureus (strain MRSA252).